The chain runs to 225 residues: Superantigen-like protein 11 (225 aa).

The first 30 residues, 1–30 (MKLKNIAKASLALGILTTGMITTTAQPVKA), serve as a signal peptide directing secretion. Residues 94-196 (VDIFVVRENS…RITMKDGGFY (103 aa)) form a sialyl Lewis X-binding region.

The protein belongs to the staphylococcal/streptococcal toxin family. In terms of assembly, homodimer (via its C-terminal domain). Interacts with host FCAR and SELPLG (via sialyl Lewis X).

The protein resides in the secreted. Secreted protein that plays a role in the inhibition of host immune system. Targets myeloid cells such as monocytes or granulocytes through binding with sialyllactosamine-containing glycoproteins. Prevents initial rolling of neutrophils toward the site of infection by interacting with host SELPLG. Disrupts neutrophil motility by induction of cell adhesion via interacting with glycans but independently of SELPLG. The polypeptide is Superantigen-like protein 11 (Staphylococcus aureus (strain Newman)).